A 303-amino-acid chain; its full sequence is Glycine--tRNA ligase alpha subunit (303 aa).

The protein belongs to the class-II aminoacyl-tRNA synthetase family. In terms of assembly, tetramer of two alpha and two beta subunits.

The protein resides in the cytoplasm. It carries out the reaction tRNA(Gly) + glycine + ATP = glycyl-tRNA(Gly) + AMP + diphosphate. The chain is Glycine--tRNA ligase alpha subunit from Salmonella arizonae (strain ATCC BAA-731 / CDC346-86 / RSK2980).